The primary structure comprises 116 residues: Ribonuclease P protein component (116 aa).

The protein belongs to the RnpA family. In terms of assembly, consists of a catalytic RNA component (M1 or rnpB) and a protein subunit.

It carries out the reaction Endonucleolytic cleavage of RNA, removing 5'-extranucleotides from tRNA precursor.. Its function is as follows. RNaseP catalyzes the removal of the 5'-leader sequence from pre-tRNA to produce the mature 5'-terminus. It can also cleave other RNA substrates such as 4.5S RNA. The protein component plays an auxiliary but essential role in vivo by binding to the 5'-leader sequence and broadening the substrate specificity of the ribozyme. This chain is Ribonuclease P protein component, found in Mycobacterium bovis (strain ATCC BAA-935 / AF2122/97).